The primary structure comprises 904 residues: Alanine--tRNA ligase (904 aa).

4 residues coordinate Zn(2+): His600, His604, Cys704, and His708.

Belongs to the class-II aminoacyl-tRNA synthetase family. Zn(2+) serves as cofactor.

It localises to the cytoplasm. The catalysed reaction is tRNA(Ala) + L-alanine + ATP = L-alanyl-tRNA(Ala) + AMP + diphosphate. Its function is as follows. Catalyzes the attachment of alanine to tRNA(Ala) in a two-step reaction: alanine is first activated by ATP to form Ala-AMP and then transferred to the acceptor end of tRNA(Ala). Also edits incorrectly charged Ser-tRNA(Ala) and Gly-tRNA(Ala) via its editing domain. This chain is Alanine--tRNA ligase, found in Metallosphaera sedula (strain ATCC 51363 / DSM 5348 / JCM 9185 / NBRC 15509 / TH2).